A 164-amino-acid polypeptide reads, in one-letter code: ATP synthase subunit b (164 aa).

A helical transmembrane segment spans residues 5 to 25 (IGELIGNFILVAGSFLLLIVL).

It belongs to the ATPase B chain family. F-type ATPases have 2 components, F(1) - the catalytic core - and F(0) - the membrane proton channel. F(1) has five subunits: alpha(3), beta(3), gamma(1), delta(1), epsilon(1). F(0) has three main subunits: a(1), b(2) and c(10-14). The alpha and beta chains form an alternating ring which encloses part of the gamma chain. F(1) is attached to F(0) by a central stalk formed by the gamma and epsilon chains, while a peripheral stalk is formed by the delta and b chains.

It is found in the cell membrane. Functionally, f(1)F(0) ATP synthase produces ATP from ADP in the presence of a proton or sodium gradient. F-type ATPases consist of two structural domains, F(1) containing the extramembraneous catalytic core and F(0) containing the membrane proton channel, linked together by a central stalk and a peripheral stalk. During catalysis, ATP synthesis in the catalytic domain of F(1) is coupled via a rotary mechanism of the central stalk subunits to proton translocation. Component of the F(0) channel, it forms part of the peripheral stalk, linking F(1) to F(0). This is ATP synthase subunit b from Streptococcus gordonii (strain Challis / ATCC 35105 / BCRC 15272 / CH1 / DL1 / V288).